The following is a 135-amino-acid chain: uncharacterized protein (135 aa).

This is an uncharacterized protein from Acanthamoeba polyphaga (Amoeba).